Reading from the N-terminus, the 603-residue chain is DNA ligase (603 aa).

Glutamate 262 is a binding site for ATP. The N6-AMP-lysine intermediate role is filled by lysine 264. Residues arginine 269, arginine 285, glutamate 315, phenylalanine 355, arginine 432, and lysine 438 each coordinate ATP.

The protein belongs to the ATP-dependent DNA ligase family. It depends on Mg(2+) as a cofactor.

It catalyses the reaction ATP + (deoxyribonucleotide)n-3'-hydroxyl + 5'-phospho-(deoxyribonucleotide)m = (deoxyribonucleotide)n+m + AMP + diphosphate.. In terms of biological role, DNA ligase that seals nicks in double-stranded DNA during DNA replication, DNA recombination and DNA repair. In Caldivirga maquilingensis (strain ATCC 700844 / DSM 13496 / JCM 10307 / IC-167), this protein is DNA ligase.